A 209-amino-acid polypeptide reads, in one-letter code: COP9 signalosome complex subunit 8 (209 aa).

A PCI domain is found at 8 to 179; sequence ESAFSFKKLL…GALDVSFNKF (172 aa). Ser175 bears the Phosphoserine mark.

Belongs to the CSN8 family. Component of the CSN complex, composed of COPS1/GPS1, COPS2, COPS3, COPS4, COPS5, COPS6, COPS7 (COPS7A or COPS7B), COPS8 and COPS9 isoform 1. In the complex, it probably interacts directly with COPS3, COPS4 and COPS7 (COPS7A or COPS7B).

It localises to the cytoplasm. The protein resides in the nucleus. Its function is as follows. Component of the COP9 signalosome complex (CSN), a complex involved in various cellular and developmental processes. The CSN complex is an essential regulator of the ubiquitin (Ubl) conjugation pathway by mediating the deneddylation of the cullin subunits of SCF-type E3 ligase complexes, leading to decrease the Ubl ligase activity of SCF-type complexes such as SCF, CSA or DDB2. The complex is also involved in phosphorylation of p53/TP53, c-jun/JUN, IkappaBalpha/NFKBIA, ITPK1 and IRF8/ICSBP, possibly via its association with CK2 and PKD kinases. CSN-dependent phosphorylation of TP53 and JUN promotes and protects degradation by the Ubl system, respectively. The polypeptide is COP9 signalosome complex subunit 8 (COPS8) (Homo sapiens (Human)).